A 433-amino-acid polypeptide reads, in one-letter code: Enolase (433 aa).

(2R)-2-phosphoglycerate is bound at residue Q167. E209 (proton donor) is an active-site residue. The Mg(2+) site is built by D246, E287, and D314. Positions 339, 368, 369, and 390 each coordinate (2R)-2-phosphoglycerate. K339 (proton acceptor) is an active-site residue.

Belongs to the enolase family. Requires Mg(2+) as cofactor.

The protein resides in the cytoplasm. Its subcellular location is the secreted. It localises to the cell surface. The catalysed reaction is (2R)-2-phosphoglycerate = phosphoenolpyruvate + H2O. It functions in the pathway carbohydrate degradation; glycolysis; pyruvate from D-glyceraldehyde 3-phosphate: step 4/5. Functionally, catalyzes the reversible conversion of 2-phosphoglycerate (2-PG) into phosphoenolpyruvate (PEP). It is essential for the degradation of carbohydrates via glycolysis. This chain is Enolase, found in Prochlorococcus marinus (strain NATL2A).